The sequence spans 305 residues: Acetylglutamate kinase (305 aa).

Substrate is bound by residues 67–68 (GG), Arg-89, and Asn-190.

It belongs to the acetylglutamate kinase family. ArgB subfamily.

The protein resides in the cytoplasm. It carries out the reaction N-acetyl-L-glutamate + ATP = N-acetyl-L-glutamyl 5-phosphate + ADP. It participates in amino-acid biosynthesis; L-arginine biosynthesis; N(2)-acetyl-L-ornithine from L-glutamate: step 2/4. In terms of biological role, catalyzes the ATP-dependent phosphorylation of N-acetyl-L-glutamate. This is Acetylglutamate kinase from Bifidobacterium animalis subsp. lactis (strain AD011).